A 179-amino-acid polypeptide reads, in one-letter code: Shikimate kinase (179 aa).

Residue 15 to 20 (GAGKTS) participates in ATP binding. Thr-19 contributes to the Mg(2+) binding site. Substrate-binding residues include Asp-37, Arg-61, and Gly-83. Arg-122 is a binding site for ATP. Arg-142 is a substrate binding site.

This sequence belongs to the shikimate kinase family. Monomer. Mg(2+) serves as cofactor.

The protein resides in the cytoplasm. The catalysed reaction is shikimate + ATP = 3-phosphoshikimate + ADP + H(+). Its pathway is metabolic intermediate biosynthesis; chorismate biosynthesis; chorismate from D-erythrose 4-phosphate and phosphoenolpyruvate: step 5/7. Catalyzes the specific phosphorylation of the 3-hydroxyl group of shikimic acid using ATP as a cosubstrate. The polypeptide is Shikimate kinase (Coxiella burnetii (strain Dugway 5J108-111)).